A 509-amino-acid polypeptide reads, in one-letter code: ATP synthase subunit alpha (509 aa).

Gly169 to Thr176 is an ATP binding site.

Belongs to the ATPase alpha/beta chains family. As to quaternary structure, F-type ATPases have 2 components, CF(1) - the catalytic core - and CF(0) - the membrane proton channel. CF(1) has five subunits: alpha(3), beta(3), gamma(1), delta(1), epsilon(1). CF(0) has three main subunits: a(1), b(2) and c(9-12). The alpha and beta chains form an alternating ring which encloses part of the gamma chain. CF(1) is attached to CF(0) by a central stalk formed by the gamma and epsilon chains, while a peripheral stalk is formed by the delta and b chains.

Its subcellular location is the cell inner membrane. It catalyses the reaction ATP + H2O + 4 H(+)(in) = ADP + phosphate + 5 H(+)(out). In terms of biological role, produces ATP from ADP in the presence of a proton gradient across the membrane. The alpha chain is a regulatory subunit. The polypeptide is ATP synthase subunit alpha (Chelativorans sp. (strain BNC1)).